A 340-amino-acid chain; its full sequence is Deubiquitinase SseL (340 aa).

The active site involves His-223. Cys-285 acts as the Nucleophile in catalysis.

The protein belongs to the peptidase C79 family.

It is found in the secreted. The protein resides in the host cytoplasm. Effector proteins function to alter host cell physiology and promote bacterial survival in host tissues. This protease targets the host cell ubiquitin pathway by acting as a deubiquitinase in infected host cells. The polypeptide is Deubiquitinase SseL (sseL) (Salmonella choleraesuis (strain SC-B67)).